Consider the following 334-residue polypeptide: Proline-serine-threonine phosphatase-interacting protein 2 (334 aa).

Residues 4-264 (SLFKGNFWST…SLETCSIEKD (261 aa)) enclose the F-BAR domain. Residues 66-163 (GQSEINTLKR…AEQAVHRSAN (98 aa)) are a coiled coil. The disordered stretch occupies residues 288–322 (YSPQRNAAPPGKTTGPNPARRGPLPVPKRIPDDPD). Residues tyrosine 323 and tyrosine 329 each carry the phosphotyrosine modification.

Post-translationally, phosphorylated on tyrosine. As to expression, expressed in macrophage-containing tissues, including bone marrow, spleen, liver, kidney, intestine and brain.

It is found in the cytoplasm. The protein resides in the membrane. In terms of biological role, binds to F-actin. May be involved in regulation of the actin cytoskeleton. The polypeptide is Proline-serine-threonine phosphatase-interacting protein 2 (Pstpip2) (Mus musculus (Mouse)).